The chain runs to 73 residues: Conotoxin Leo-O2 (73 aa).

Residues 1 to 22 (MKLTCVLIIAVLFLTACQLVTA) form the signal peptide. The propeptide occupies 23-47 (DYSGDEQQYRAMRLIDAMRNFGDTR). 3 cysteine pairs are disulfide-bonded: C49–C59, C56–C64, and C58–C69.

Belongs to the conotoxin O1 superfamily. As to expression, expressed by the venom duct.

The protein localises to the secreted. In Conus leopardus (Leopard cone), this protein is Conotoxin Leo-O2.